The chain runs to 94 residues: C-X-C motif chemokine 11-1 (94 aa).

Positions 1–19 (MKTVTALLLVSLAVVAIEG) are cleaved as a signal peptide. Cystine bridges form between C27-C54 and C29-C71.

The protein belongs to the intercrine alpha (chemokine CxC) family.

Its subcellular location is the secreted. Ligand for cxcr3.2. Chemotactic for macrophages. The chain is C-X-C motif chemokine 11-1 (cxcl11.1) from Danio rerio (Zebrafish).